A 391-amino-acid polypeptide reads, in one-letter code: DNA/RNA-binding protein KIN17 (391 aa).

The C2H2-type zinc finger occupies 28–50; the sequence is CQMCQKQCRDENGFKCHCMSESH. The winged helix-turn-helix (wHTH) stretch occupies residues 51 to 160; sequence QRQLLLASEN…RQLELEKKKK (110 aa). Lys135 is modified (N6,N6,N6-trimethyllysine; by METTL22; alternate). At Lys135 the chain carries N6-methyllysine; alternate. Coiled coils occupy residues 147 to 180 and 252 to 275; these read ETIR…VRRG and AKKK…TART. A disordered region spans residues 206 to 258; the sequence is NLNKGAGGSAGATTSKSSSLGPSALKLLGSAASGKRKESSQSSAQPAKKKKSA. The tract at residues 282 to 332 is C-terminal subdomain A; it reads GIVVKIITKKLGEKYHKKKGVVKEVIDRYTAVVKMTDSGDRLKLDQTHLET. Positions 338-389 are C-terminal subdomain B; that stretch reads GKRVLVLNGGYRGNEGTLESINEKAFSATIVIETGPLKGRRVEGIQYEDISK.

The protein belongs to the KIN17 family. Associated with DNA polymerase alpha, RFC1 and cyclin A, in multiprotein DNA replication complexes. Also associates with replication origins at the G1/S phase boundary and throughout the S phase in vivo. In terms of tissue distribution, highly expressed in transformed mouse AtT20 neuroendocrine cells. Expressed at a lower level in testis, kidney, skeletal muscle, liver, lung, spleen, brain and heart and kidney. In testis, expressed at much higher levels in proliferating cells than in differentiating cells. Not detected in embryo.

The protein localises to the nucleus. The protein resides in the cytoplasm. In terms of biological role, involved in DNA replication and the cellular response to DNA damage. May participate in DNA replication factories and create a bridge between DNA replication and repair mediated by high molecular weight complexes. May play a role in illegitimate recombination and regulation of gene expression. May participate in mRNA processing. Binds, in vitro, to double-stranded DNA. Also shown to bind preferentially to curved DNA in vitro and in vivo. Binds via its C-terminal domain to RNA in vitro. The chain is DNA/RNA-binding protein KIN17 from Mus musculus (Mouse).